We begin with the raw amino-acid sequence, 138 residues long: Phosphoribosyl-AMP cyclohydrolase (138 aa).

Aspartate 84 provides a ligand contact to Mg(2+). Zn(2+) is bound at residue cysteine 85. Mg(2+)-binding residues include aspartate 86 and aspartate 88. Residues cysteine 102 and cysteine 109 each contribute to the Zn(2+) site.

This sequence belongs to the PRA-CH family. Homodimer. Mg(2+) is required as a cofactor. Requires Zn(2+) as cofactor.

The protein resides in the cytoplasm. The catalysed reaction is 1-(5-phospho-beta-D-ribosyl)-5'-AMP + H2O = 1-(5-phospho-beta-D-ribosyl)-5-[(5-phospho-beta-D-ribosylamino)methylideneamino]imidazole-4-carboxamide. It participates in amino-acid biosynthesis; L-histidine biosynthesis; L-histidine from 5-phospho-alpha-D-ribose 1-diphosphate: step 3/9. Its function is as follows. Catalyzes the hydrolysis of the adenine ring of phosphoribosyl-AMP. The sequence is that of Phosphoribosyl-AMP cyclohydrolase from Burkholderia pseudomallei (strain K96243).